A 148-amino-acid polypeptide reads, in one-letter code: Probable histone H2A.1 (148 aa).

Residues Met-1–Val-23 are compositionally biased toward basic residues. Disordered stretches follow at residues Met-1–Arg-28 and Lys-127–Ala-148. The segment covering Ala-131–Thr-142 has biased composition (low complexity). 2 consecutive short sequence motifs (SPKK motif) follow at residues Ser-137–Lys-140 and Ser-144–Lys-147.

This sequence belongs to the histone H2A family. In terms of assembly, the nucleosome is a histone octamer containing two molecules each of H2A, H2B, H3 and H4 assembled in one H3-H4 heterotetramer and two H2A-H2B heterodimers. The octamer wraps approximately 147 bp of DNA.

Its subcellular location is the nucleus. It localises to the chromosome. Functionally, core component of nucleosome. Nucleosomes wrap and compact DNA into chromatin, limiting DNA accessibility to the cellular machineries which require DNA as a template. Histones thereby play a central role in transcription regulation, DNA repair, DNA replication and chromosomal stability. DNA accessibility is regulated via a complex set of post-translational modifications of histones, also called histone code, and nucleosome remodeling. This Medicago truncatula (Barrel medic) protein is Probable histone H2A.1.